A 599-amino-acid chain; its full sequence is Serine/threonine-protein kinase haspin homolog (599 aa).

The Protein kinase domain occupies 287 to 599; the sequence is PESIVKIGEG…FSDMLMDQIS (313 aa). ATP is bound by residues 293–301, K310, 407–412, 448–453, and 486–488; these read IGEGTYGEA, EHGGKD, DLHWGN, and DFT. The Proton acceptor role is filled by D448.

This sequence belongs to the protein kinase superfamily. Ser/Thr protein kinase family. Haspin subfamily. In terms of tissue distribution, expressed in meristems and primordia of root tips, lateral roots, shoot apex, leaves and flowers.

It localises to the cytoplasm. Its subcellular location is the perinuclear region. The protein localises to the nucleus. It is found in the chromosome. The protein resides in the cytoskeleton. It localises to the phragmoplast. It catalyses the reaction L-seryl-[protein] + ATP = O-phospho-L-seryl-[protein] + ADP + H(+). The catalysed reaction is L-threonyl-[protein] + ATP = O-phospho-L-threonyl-[protein] + ADP + H(+). Threonine-protein kinase that phosphorylates histone H3 in vitro at 'Thr-3' (H3T3ph) and 'Thr-11' (H3T11ph), but not at 'Ser-10' (H3S10ph) or 'Ser-28' (H3S28ph). Plays a role in mitotic cell division during plant growth. Threonine-protein kinase that phosphorylates histone H3 in vitro at 'Thr-3' (H3T3ph), but not at 'Thr-11' (H3T11ph), 'Ser-10' (H3S10ph) or 'Ser-28' (H3S28ph). Involved in histone H3 phosphorylation in mitotic cells. Contributes to organ and plant development, as well as embryonic patterning. The sequence is that of Serine/threonine-protein kinase haspin homolog from Arabidopsis thaliana (Mouse-ear cress).